Reading from the N-terminus, the 294-residue chain is Beta-glucoside kinase (294 aa).

5–11 is an ATP binding site; it reads AFDIGGT.

The protein belongs to the ROK (NagC/XylR) family.

The catalysed reaction is D-cellobiose + ATP = 6-phospho-beta-D-glucosyl-(1-&gt;4)-D-glucose + ADP + H(+). Its function is as follows. Catalyzes the ATP-dependent phosphorylation of cellobiose to produce cellobiose-6'-P. May have a dual role of kinase and transcriptional regulator of the cellobiose-PTS operon. The polypeptide is Beta-glucoside kinase (bglK) (Listeria monocytogenes serovar 1/2a (strain ATCC BAA-679 / EGD-e)).